A 484-amino-acid chain; its full sequence is Arginyl-tRNA--protein transferase 1 (484 aa).

This sequence belongs to the R-transferase family.

The enzyme catalyses an N-terminal L-alpha-aminoacyl-[protein] + L-arginyl-tRNA(Arg) = an N-terminal L-arginyl-L-aminoacyl-[protein] + tRNA(Arg) + H(+). Functionally, involved in the post-translational conjugation of arginine to the N-terminal aspartate or glutamate of a protein. This arginylation is required for degradation of the protein via the ubiquitin pathway. Does not arginylate cysteine residues. The sequence is that of Arginyl-tRNA--protein transferase 1 (Ate1) from Drosophila melanogaster (Fruit fly).